The chain runs to 558 residues: Potassium-transporting ATPase potassium-binding subunit 1 (558 aa).

12 consecutive transmembrane segments (helical) span residues 1-21 (MEIILFLTMMVMIAYVFSGYL), 66-86 (FNGFMGVITFVLLIVQQWLFL), 127-147 (MIVMTYLMFTSSASGYAVCIA), 166-186 (IVRFIVRVLLPLSCLISILLM), 245-265 (IWSNFIEMGSMMLLPMSMLFL), 281-301 (ALILFVAMFFIFIAILTLTMW), 327-347 (FGAGLSALFTVITTAFTTGSV), 354-374 (LTPLGGLGPMVLMMLNVVFGG), 377-397 (VGLMNLLIYVLLTLFICSLMV), 416-436 (IVLVFLIHPILILVFSALAFM), 482-502 (ISTGIIMLLSRYIPIILQLMI), and 531-551 (IVFIVLLSGLTFIPVLLLGPI).

This sequence belongs to the KdpA family. The system is composed of three essential subunits: KdpA, KdpB and KdpC.

The protein localises to the cell membrane. Part of the high-affinity ATP-driven potassium transport (or Kdp) system, which catalyzes the hydrolysis of ATP coupled with the electrogenic transport of potassium into the cytoplasm. This subunit binds the extracellular potassium ions and delivers the ions to the membrane domain of KdpB through an intramembrane tunnel. In Staphylococcus aureus (strain MRSA252), this protein is Potassium-transporting ATPase potassium-binding subunit 1.